The following is a 445-amino-acid chain: MNEEYDVIVLGTGLTECILSGIMSVNGKKVLHMDRNPYYGGESASITPLEDLYKRYKIPGSPPESMGRGRDWNVDLIPKFLMANGQLVKMLLYTEVTRYLDFKVTEGSFVYKGGKIYKVPSTEAEALASSLMGLFEKRRFRKFLVYVANFDEKDPRTFEGIDPKKTTMRDVYKKFDLGQDVIDFTGHALALYRTDDYLDQPCYETINRIKLYSESLARYGKSPYLYPLYGLGELPQGFARLSAIYGGTYMLNKPIEEIIVQNGKVIGVKSEGEIARCKQLICDPSYVKDRVEKVGQVIRVICILSHPIKNTNDANSCQIIIPQNQVNRKSDIYVCMISFAHNVAAQGKYIAIVSTTVETKEPEKEIRPALELLEPIEQKFVSISDLLVPKDLGTESLIFISRTYDATTHFETTCDDIKNIYKRMTGSEFDFEEMKRKKNDIYGED.

The residue at position 1 (Met1) is an N-acetylmethionine. N6-succinyllysine is present on Lys57. Position 112 is an N6-acetyllysine (Lys112). Ser130 carries the phosphoserine modification. An N6-acetyllysine modification is found at Lys269. A Phosphoserine modification is found at Ser382.

The protein belongs to the Rab GDI family. In terms of assembly, interacts with RHOH. Interacts with the GDP-bound inactive forms of RAB3A, RAB3B, RAB3C, RAB5A, RAB5B, RAB5C, RAB8A, RAB8B, RAB10, RAB12, RAB35, and RAB43; binds RAB3D to a lesser extent. Interacts with DZIP1; this interaction negatively regulates the interaction of GDI2 with GDP-bound RAB8A.

The protein resides in the cytoplasm. It is found in the membrane. The protein localises to the golgi apparatus. Its subcellular location is the trans-Golgi network. In terms of biological role, GDP-dissociation inhibitor preventing the GDP to GTP exchange of most Rab proteins. By keeping these small GTPases in their inactive GDP-bound form regulates intracellular membrane trafficking. Negatively regulates protein transport to the cilium and ciliogenesis through the inhibition of RAB8A. In Pongo abelii (Sumatran orangutan), this protein is Rab GDP dissociation inhibitor beta (GDI2).